Reading from the N-terminus, the 274-residue chain is Penicillin-insensitive murein endopeptidase (274 aa).

The signal sequence occupies residues 1–19; sequence MNKTAIALLALLASSASLA. 3 cysteine pairs are disulfide-bonded: cysteine 44–cysteine 265, cysteine 187–cysteine 235, and cysteine 216–cysteine 223. Zn(2+) is bound by residues histidine 110, histidine 113, aspartate 120, aspartate 147, histidine 150, and histidine 211. The tract at residues 228–274 is disordered; the sequence is LPPSGDGCGAELQSWFEPPKPGTTKPEKKTPPPLPPSCQALLDEHVI.

This sequence belongs to the peptidase M74 family. Dimer. Zn(2+) serves as cofactor.

The protein localises to the periplasm. Its activity is regulated as follows. Inhibited by Zn(2+) at 10 mM and by metal chelating agents EDTA and 1,10-phenanthroline. Its function is as follows. Murein endopeptidase that cleaves the D-alanyl-meso-2,6-diamino-pimelyl amide bond that connects peptidoglycan strands. Likely plays a role in the removal of murein from the sacculus and could also play a role in the integration of nascent murein strands into the sacculus. The chain is Penicillin-insensitive murein endopeptidase (mepA) from Escherichia coli (strain K12).